We begin with the raw amino-acid sequence, 366 residues long: D-alanine--D-alanine ligase (366 aa).

Residues 144-347 (KRLLKDAGLK…YRELIENLIE (204 aa)) enclose the ATP-grasp domain. ATP is bound at residue 174 to 229 (KEELGLPMFIKPANQGSSVGVHKVENEEQFYSAIKDAFQFDHKLLVEEAIVGREIE). Mg(2+)-binding residues include Asp301, Glu314, and Asn316.

This sequence belongs to the D-alanine--D-alanine ligase family. Mg(2+) serves as cofactor. Mn(2+) is required as a cofactor.

It localises to the cytoplasm. The enzyme catalyses 2 D-alanine + ATP = D-alanyl-D-alanine + ADP + phosphate + H(+). The protein operates within cell wall biogenesis; peptidoglycan biosynthesis. Cell wall formation. This chain is D-alanine--D-alanine ligase, found in Oceanobacillus iheyensis (strain DSM 14371 / CIP 107618 / JCM 11309 / KCTC 3954 / HTE831).